Reading from the N-terminus, the 209-residue chain is Thymidylate kinase (209 aa).

Residue glycine 13–serine 20 coordinates ATP.

The protein belongs to the thymidylate kinase family.

The catalysed reaction is dTMP + ATP = dTDP + ADP. Its function is as follows. Phosphorylation of dTMP to form dTDP in both de novo and salvage pathways of dTTP synthesis. The polypeptide is Thymidylate kinase (Shewanella sp. (strain ANA-3)).